The sequence spans 299 residues: DNA-binding transcriptional repressor CapW (299 aa).

Residues 1 to 22 (MTDESKPTDDQPTSKGRQGARW) are disordered. A winged HTH domain region spans residues 1 to 95 (MTDESKPTDD…SFKAVFPSSA (95 aa)). A WYL domain region spans residues 96–207 (VERYLDDLLR…LTRIKCCKYV (112 aa)). The 81-residue stretch at 131–211 (GRRLNADIVG…KCCKYVGQDR (81 aa)) folds into the WYL domain. The interval 156–200 (YQSLTDPEGGERMLSPHALVHDGNRWHVRAYCHKRKAFRDFSLTR) is probable ligand-binding region. Residues 208 to 299 (GQDRDRADED…RDEIKDLIQY (92 aa)) form a WCX domain region.

As to quaternary structure, homodimer.

Its function is as follows. Transcriptional regulator of a CBASS antivirus system. CBASS (cyclic oligonucleotide-based antiphage signaling system) provides immunity against bacteriophage. The CD-NTase protein synthesizes cyclic nucleotides in response to infection; these serve as specific second messenger signals. The signals activate a diverse range of effectors, leading to bacterial cell death and thus abortive phage infection. A type III CBASS system, part of a Cap17-CapW-CdnC-Cap7-Cap6-Cap18 locus. Binds specifically to palindromes that overlap the -10 site in the promoter of cdnC, found between the genes for divergently transcribed capW and cdnC (cognate DNA). Probably represses transcription bidirectionally from the promoter. In Pseudomonas aeruginosa, this protein is DNA-binding transcriptional repressor CapW.